Reading from the N-terminus, the 376-residue chain is Mitogen-activated protein kinase ERK-A (376 aa).

Residues 38 to 326 enclose the Protein kinase domain; it reads YIKLAYIGEG…VEEALAHPYL (289 aa). ATP-binding positions include 44–52 and Lys67; that span reads IGEGAYGMV. Asp162 serves as the catalytic Proton acceptor. Thr198 is modified (phosphothreonine). A TXY motif is present at residues 198–200; the sequence is TEY. Position 200 is a phosphotyrosine (Tyr200).

Belongs to the protein kinase superfamily. CMGC Ser/Thr protein kinase family. MAP kinase subfamily. Requires Mg(2+) as cofactor. In terms of processing, dually phosphorylated on Thr-198 and Tyr-200, which activates the enzyme. Phosphorylated on tyrosine residue(s) in response to insulin. In third instar larvae, expressed in eye imaginal disks. In adults, expressed in head and body.

The protein localises to the cytoplasm. It is found in the nucleus. It catalyses the reaction L-seryl-[protein] + ATP = O-phospho-L-seryl-[protein] + ADP + H(+). It carries out the reaction L-threonyl-[protein] + ATP = O-phospho-L-threonyl-[protein] + ADP + H(+). Its activity is regulated as follows. Activated by tyrosine and threonine phosphorylation. Serine/threonine kinase which acts as an essential component of the MAP kinase signal transduction pathway to regulate proliferation, differentiation and effect cell fate decisions in various tissues. Required downstream of phl/Raf in the sev/sevenless, tor/torso, and EGF receptor homolog Egfr signal transduction pathways. Required for embryonic epithelial tissue repair. During larval development, mediates Ptth/tor signaling leading to the production of ecdysone, a hormone required for the initiation of metamorphosis. This is Mitogen-activated protein kinase ERK-A from Drosophila melanogaster (Fruit fly).